Consider the following 436-residue polypeptide: 23S rRNA (uracil(1939)-C(5))-methyltransferase RlmD (436 aa).

The TRAM domain maps to 10–68 (KQKTTQKIVAEIQDLDYQGLGVAKIQGKTWFIENALPTEKVEAVVTDEKRQYGLATAQK). [4Fe-4S] cluster is bound by residues Cys81, Cys87, Cys90, and Cys168. The S-adenosyl-L-methionine site is built by Gln270, Phe299, Asn304, Glu320, Asp347, and Asp368. The active-site Nucleophile is Cys394.

The protein belongs to the class I-like SAM-binding methyltransferase superfamily. RNA M5U methyltransferase family. RlmD subfamily.

The enzyme catalyses uridine(1939) in 23S rRNA + S-adenosyl-L-methionine = 5-methyluridine(1939) in 23S rRNA + S-adenosyl-L-homocysteine + H(+). Its function is as follows. Catalyzes the formation of 5-methyl-uridine at position 1939 (m5U1939) in 23S rRNA. The chain is 23S rRNA (uracil(1939)-C(5))-methyltransferase RlmD from Haemophilus parainfluenzae (strain T3T1).